Consider the following 388-residue polypeptide: Succinate--CoA ligase [ADP-forming] subunit beta (388 aa).

Positions 9-244 constitute an ATP-grasp domain; that stretch reads KEILRKFGVA…LDEEDPAEIE (236 aa). ATP contacts are provided by residues Lys-46, 53 to 55, Glu-99, Ala-102, and Glu-107; that span reads GRG. Mg(2+) is bound by residues Asn-199 and Asp-213. Residues Asn-264 and 321–323 each bind substrate; that span reads GIM.

The protein belongs to the succinate/malate CoA ligase beta subunit family. As to quaternary structure, heterotetramer of two alpha and two beta subunits. Mg(2+) is required as a cofactor.

It catalyses the reaction succinate + ATP + CoA = succinyl-CoA + ADP + phosphate. The catalysed reaction is GTP + succinate + CoA = succinyl-CoA + GDP + phosphate. It participates in carbohydrate metabolism; tricarboxylic acid cycle; succinate from succinyl-CoA (ligase route): step 1/1. Functionally, succinyl-CoA synthetase functions in the citric acid cycle (TCA), coupling the hydrolysis of succinyl-CoA to the synthesis of either ATP or GTP and thus represents the only step of substrate-level phosphorylation in the TCA. The beta subunit provides nucleotide specificity of the enzyme and binds the substrate succinate, while the binding sites for coenzyme A and phosphate are found in the alpha subunit. In Burkholderia ambifaria (strain MC40-6), this protein is Succinate--CoA ligase [ADP-forming] subunit beta.